Reading from the N-terminus, the 315-residue chain is 4-hydroxy-3-methylbut-2-enyl diphosphate reductase (315 aa).

Cys12 lines the [4Fe-4S] cluster pocket. (2E)-4-hydroxy-3-methylbut-2-enyl diphosphate-binding residues include His41 and His74. Residues His41 and His74 each coordinate dimethylallyl diphosphate. Residues His41 and His74 each contribute to the isopentenyl diphosphate site. [4Fe-4S] cluster is bound at residue Cys96. His124 is a binding site for (2E)-4-hydroxy-3-methylbut-2-enyl diphosphate. Dimethylallyl diphosphate is bound at residue His124. Isopentenyl diphosphate is bound at residue His124. Glu126 acts as the Proton donor in catalysis. Thr168 is a (2E)-4-hydroxy-3-methylbut-2-enyl diphosphate binding site. Cys198 is a [4Fe-4S] cluster binding site. (2E)-4-hydroxy-3-methylbut-2-enyl diphosphate-binding residues include Ser226, Ser227, Asn228, and Ser270. Ser226, Ser227, Asn228, and Ser270 together coordinate dimethylallyl diphosphate. Positions 226, 227, 228, and 270 each coordinate isopentenyl diphosphate.

The protein belongs to the IspH family. [4Fe-4S] cluster serves as cofactor.

The catalysed reaction is isopentenyl diphosphate + 2 oxidized [2Fe-2S]-[ferredoxin] + H2O = (2E)-4-hydroxy-3-methylbut-2-enyl diphosphate + 2 reduced [2Fe-2S]-[ferredoxin] + 2 H(+). The enzyme catalyses dimethylallyl diphosphate + 2 oxidized [2Fe-2S]-[ferredoxin] + H2O = (2E)-4-hydroxy-3-methylbut-2-enyl diphosphate + 2 reduced [2Fe-2S]-[ferredoxin] + 2 H(+). Its pathway is isoprenoid biosynthesis; dimethylallyl diphosphate biosynthesis; dimethylallyl diphosphate from (2E)-4-hydroxy-3-methylbutenyl diphosphate: step 1/1. It participates in isoprenoid biosynthesis; isopentenyl diphosphate biosynthesis via DXP pathway; isopentenyl diphosphate from 1-deoxy-D-xylulose 5-phosphate: step 6/6. Functionally, catalyzes the conversion of 1-hydroxy-2-methyl-2-(E)-butenyl 4-diphosphate (HMBPP) into a mixture of isopentenyl diphosphate (IPP) and dimethylallyl diphosphate (DMAPP). Acts in the terminal step of the DOXP/MEP pathway for isoprenoid precursor biosynthesis. The sequence is that of 4-hydroxy-3-methylbut-2-enyl diphosphate reductase from Pseudomonas syringae pv. syringae (strain B728a).